We begin with the raw amino-acid sequence, 425 residues long: Serine--tRNA ligase (425 aa).

An L-serine-binding site is contributed by 230–232 (TAE). Residue 261–263 (RSE) participates in ATP binding. Residue Glu-284 participates in L-serine binding. An ATP-binding site is contributed by 348–351 (EISS). Ser-384 lines the L-serine pocket.

The protein belongs to the class-II aminoacyl-tRNA synthetase family. Type-1 seryl-tRNA synthetase subfamily. As to quaternary structure, homodimer. The tRNA molecule binds across the dimer.

The protein localises to the cytoplasm. The catalysed reaction is tRNA(Ser) + L-serine + ATP = L-seryl-tRNA(Ser) + AMP + diphosphate + H(+). The enzyme catalyses tRNA(Sec) + L-serine + ATP = L-seryl-tRNA(Sec) + AMP + diphosphate + H(+). Its pathway is aminoacyl-tRNA biosynthesis; selenocysteinyl-tRNA(Sec) biosynthesis; L-seryl-tRNA(Sec) from L-serine and tRNA(Sec): step 1/1. Its function is as follows. Catalyzes the attachment of serine to tRNA(Ser). Is also able to aminoacylate tRNA(Sec) with serine, to form the misacylated tRNA L-seryl-tRNA(Sec), which will be further converted into selenocysteinyl-tRNA(Sec). This Nitratidesulfovibrio vulgaris (strain DSM 19637 / Miyazaki F) (Desulfovibrio vulgaris) protein is Serine--tRNA ligase.